A 259-amino-acid polypeptide reads, in one-letter code: 1,2-dihydroxy-1,2-dihydronaphthalene dehydrogenase (259 aa).

NAD(+) is bound by residues 8–35 and Asp-58; that span reads AITG…SALV. A substrate-binding site is contributed by Ser-140. Catalysis depends on Tyr-153, which acts as the Proton acceptor. Position 157 (Lys-157) interacts with NAD(+).

The protein belongs to the short-chain dehydrogenases/reductases (SDR) family.

It carries out the reaction (1R,2S)-1,2-dihydronaphthalene-1,2-diol + NAD(+) = naphthalene-1,2-diol + NADH + H(+). Its pathway is aromatic compound metabolism; naphthalene degradation. Functionally, catalyzes the oxidation of naphthalene dihydrodiol into 1,2-dihydroxynaphthalene. This chain is 1,2-dihydroxy-1,2-dihydronaphthalene dehydrogenase, found in Ralstonia sp.